The chain runs to 539 residues: MTKYIFVTGGVVSSLGKGITASSLGRLLKNRGLKVTMQKFDPYINIDPGTMSPYQHGEVYVTEDGTEADLDLGHYERIVDVRTSKYSNVTTGKIYQEVLEKERRGDYNGATVQVIPHITDMIKKKIMRAALTTDSDVIISEIGGTVGDMESTPFMEAIRQMRREVGEENVMYIHCTLVPLLHAAHEMKTKPTQHSVAELRSIGIQPNMLVLRAEQPIDQEHKNKISTFTDVPVDRIIESIDAPSLFDVPLAFQKQGMDQKVCDFLHIDSPKPEADMEAWKKLDDRAKNLKHHTKITLVGKYVELEDAYISVTDALQHAGYLYNTKIDVDKVQAEDITEDNIAKIMEGSDGLIVPGGFGTRGLEGMITAIKYARENDIPFLGICLGMQMASVEFARDILNLEDANTTEAEPHCKNNIIDIMADKRDEENIGGTLRLGLYPAALKKGTKTREAYGDQDVIQERHRHRFEFNNKYREAFEKAGMVFSGVSPDNHLVEIIELPKKKFFIAAQYHPEFLSRPQRPEGLFKSFIGAASGLPEQEF.

The amidoligase domain stretch occupies residues 1–267 (MTKYIFVTGG…DQKVCDFLHI (267 aa)). Ser13 lines the CTP pocket. Residue Ser13 participates in UTP binding. 14–19 (SLGKGI) is a binding site for ATP. Tyr54 is an L-glutamine binding site. Asp71 serves as a coordination point for ATP. Residues Asp71 and Glu141 each coordinate Mg(2+). CTP contacts are provided by residues 148 to 150 (DME), 188 to 193 (KTKPTQ), and Lys224. UTP is bound by residues 188–193 (KTKPTQ) and Lys224. The Glutamine amidotransferase type-1 domain occupies 294-537 (KITLVGKYVE…IGAASGLPEQ (244 aa)). Gly356 contacts L-glutamine. The Nucleophile; for glutamine hydrolysis role is filled by Cys383. Residues 384–387 (LGMQ), Glu407, and Arg465 each bind L-glutamine. Active-site residues include His510 and Glu512.

This sequence belongs to the CTP synthase family. Homotetramer.

It carries out the reaction UTP + L-glutamine + ATP + H2O = CTP + L-glutamate + ADP + phosphate + 2 H(+). The enzyme catalyses L-glutamine + H2O = L-glutamate + NH4(+). The catalysed reaction is UTP + NH4(+) + ATP = CTP + ADP + phosphate + 2 H(+). It functions in the pathway pyrimidine metabolism; CTP biosynthesis via de novo pathway; CTP from UDP: step 2/2. With respect to regulation, allosterically activated by GTP, when glutamine is the substrate; GTP has no effect on the reaction when ammonia is the substrate. The allosteric effector GTP functions by stabilizing the protein conformation that binds the tetrahedral intermediate(s) formed during glutamine hydrolysis. Inhibited by the product CTP, via allosteric rather than competitive inhibition. Its function is as follows. Catalyzes the ATP-dependent amination of UTP to CTP with either L-glutamine or ammonia as the source of nitrogen. Regulates intracellular CTP levels through interactions with the four ribonucleotide triphosphates. In Lactobacillus helveticus (strain DPC 4571), this protein is CTP synthase.